Here is a 383-residue protein sequence, read N- to C-terminus: Deoxyguanosinetriphosphate triphosphohydrolase-like protein (383 aa).

In terms of domain architecture, HD spans 62 to 198; that stretch reads RLTHSLEVST…AALADDISYI (137 aa).

Belongs to the dGTPase family. Type 2 subfamily.

In Rickettsia felis (strain ATCC VR-1525 / URRWXCal2) (Rickettsia azadi), this protein is Deoxyguanosinetriphosphate triphosphohydrolase-like protein.